The chain runs to 66 residues: Brevinin-1CDYd (66 aa).

Positions 1–22 (MFTLKKSLLILFFLGTINFSLC) are cleaved as a signal peptide. Positions 23–44 (EEERNAEEERRDDPEERDVEVE) are excised as a propeptide. A disulfide bridge connects residues Cys-60 and Cys-66.

The protein belongs to the frog skin active peptide (FSAP) family. Brevinin subfamily. Expressed by the skin glands.

The protein resides in the secreted. Antimicrobial peptide. The sequence is that of Brevinin-1CDYd from Rana dybowskii (Dybovsky's frog).